Reading from the N-terminus, the 46-residue chain is MAKMKHGSAQFRPDHLGTQPRKSDANKGKKMNTKGNENPQYIPPKG.

The interval 1-46 (MAKMKHGSAQFRPDHLGTQPRKSDANKGKKMNTKGNENPQYIPPKG) is disordered.

This sequence belongs to the SspN family.

It is found in the spore core. This is Small, acid-soluble spore protein N from Halalkalibacterium halodurans (strain ATCC BAA-125 / DSM 18197 / FERM 7344 / JCM 9153 / C-125) (Bacillus halodurans).